Reading from the N-terminus, the 835-residue chain is Transcription intermediary factor 1-beta (835 aa).

Over residues 1–19 the composition is skewed to low complexity; the sequence is MAASAAAASAAAASAASGS. Residues 1 to 49 are disordered; that stretch reads MAASAAAASAAAASAASGSPGPGEGSAGGEKRSTAPSAAASASASAAAS. The residue at position 2 (Ala2) is an N-acetylalanine. Phosphoserine is present on residues Ser19 and Ser26. A Glycyl lysine isopeptide (Lys-Gly) (interchain with G-Cter in SUMO2) cross-link involves residue Lys31. Residues 35–49 are compositionally biased toward low complexity; sequence APSAAASASASAAAS. Residue Ser50 is modified to Phosphoserine. Residues 65–121 form an RING-type zinc finger; sequence CGVCRERLRPEREPRLLPCLHSACSACLGPAAPAAANSSGDGGAAGDGTVVDCPVCK. The segment at 65 to 376 is RBCC domain; sequence CGVCRERLRP…LIYFQLHRAL (312 aa). Lys127 participates in a covalent cross-link: Glycyl lysine isopeptide (Lys-Gly) (interchain with G-Cter in SUMO2). At Ser138 the chain carries Phosphoserine. The segment at 148 to 195 adopts a B box-type 1; atypical zinc-finger fold; sequence DANQCCTSCEDNAPATSYCVECSEPLCETCVEAHQRVKYTKDHTVRST. Zn(2+)-binding residues include Cys153, Cys156, Cys177, and His181. A Glycyl lysine isopeptide (Lys-Gly) (interchain with G-Cter in SUMO2) cross-link involves residue Lys199. The B box-type 2 zinc finger occupies 204-245; the sequence is ERTVYCNVHKHEPLVLFCESCDTLTCRDCQLNAHKDHQYQFL. Zn(2+) is bound by residues Cys209, His212, Cys232, and His237. The interval 246-376 is leucine zipper alpha helical coiled-coil region; sequence EDAVRNQRKL…LIYFQLHRAL (131 aa). Residues 247 to 376 are interaction with MAGEC2; it reads DAVRNQRKLL…LIYFQLHRAL (130 aa). Glycyl lysine isopeptide (Lys-Gly) (interchain with G-Cter in SUMO2) cross-links involve residues Lys254 and Lys261. An N6-acetyllysine modification is found at Lys266. Lys272 participates in a covalent cross-link: Glycyl lysine isopeptide (Lys-Gly) (interchain with G-Cter in SUMO2). Residue Lys304 is modified to N6-acetyllysine; alternate. A Glycyl lysine isopeptide (Lys-Gly) (interchain with G-Cter in SUMO2); alternate cross-link involves residue Lys304. Residue Lys319 forms a Glycyl lysine isopeptide (Lys-Gly) (interchain with G-Cter in SUMO2) linkage. Lys340 carries the post-translational modification N6-acetyllysine. A Glycyl lysine isopeptide (Lys-Gly) (interchain with G-Cter in SUMO2) cross-link involves residue Lys366. The segment at 366-370 is involved in binding PPP1CA; the sequence is KLIYF. Residue Lys377 is modified to N6-acetyllysine; alternate. Lys377 participates in a covalent cross-link: Glycyl lysine isopeptide (Lys-Gly) (interchain with G-Cter in SUMO2); alternate. A Glycyl lysine isopeptide (Lys-Gly) (interchain with G-Cter in SUMO1); alternate cross-link involves residue Lys377. Residue Lys407 forms a Glycyl lysine isopeptide (Lys-Gly) (interchain with G-Cter in SUMO2) linkage. A disordered region spans residues 411 to 480; the sequence is ERPGTNSTGP…SRSGEGEVSG (70 aa). Position 417 is a phosphoserine (Ser417). Lys434 participates in a covalent cross-link: Glycyl lysine isopeptide (Lys-Gly) (interchain with G-Cter in SUMO2). Residues 434–443 are compositionally biased toward polar residues; that stretch reads KQGSGSSQPM. Phosphoserine occurs at positions 437, 439, and 453. Lys469 participates in a covalent cross-link: Glycyl lysine isopeptide (Lys-Gly) (interchain with G-Cter in SUMO2); alternate. Residue Lys469 forms a Glycyl lysine isopeptide (Lys-Gly) (interchain with G-Cter in SUMO1); alternate linkage. Arg470 is subject to Citrulline. Ser471 is modified (phosphoserine). Arg472 is subject to Citrulline. Residues Ser473, Ser479, and Ser489 each carry the phosphoserine modification. An HP1 box region spans residues 476-513; it reads GEVSGLMRKVPRVSLERLDLDLTADSQPPVFKVFPGST. Positions 481–494 match the PxVxL motif motif; the sequence is LMRKVPRVSLERLD. Thr498 carries the post-translational modification Phosphothreonine. At Ser501 the chain carries Phosphoserine. Lys507 is covalently cross-linked (Glycyl lysine isopeptide (Lys-Gly) (interchain with G-Cter in SUMO2)). Thr541 is subject to Phosphothreonine. Lys554 participates in a covalent cross-link: Glycyl lysine isopeptide (Lys-Gly) (interchain with G-Cter in SUMO2); alternate. Residue Lys554 forms a Glycyl lysine isopeptide (Lys-Gly) (interchain with G-Cter in SUMO); alternate linkage. Lys575 is covalently cross-linked (Glycyl lysine isopeptide (Lys-Gly) (interchain with G-Cter in SUMO2)). The segment at 584 to 618 is disordered; sequence GPGAEGPRLASPSGSTSSGLEVVAPEGTSAPGGGP. Ser594 is modified (phosphoserine). The PHD-type zinc finger occupies 625–672; sequence ATICRVCQKPGDLVMCNQCEFCFHLDCHLPALQDVPGEEWSCSLCHVL. Residue Lys676 forms a Glycyl lysine isopeptide (Lys-Gly) (interchain with G-Cter in SUMO) linkage. Ser683, Ser689, and Ser697 each carry phosphoserine. One can recognise a Bromo domain in the interval 695-799; sequence KLSPANQRKC…RFFETRMNEA (105 aa). Lys750 participates in a covalent cross-link: Glycyl lysine isopeptide (Lys-Gly) (interchain with G-Cter in SUMO2); alternate. Residue Lys750 forms a Glycyl lysine isopeptide (Lys-Gly) (interchain with G-Cter in SUMO1); alternate linkage. A Glycyl lysine isopeptide (Lys-Gly) (interchain with G-Cter in SUMO); alternate cross-link involves residue Lys750. Residue Ser752 is modified to Phosphoserine. The residue at position 755 (Tyr755) is a Phosphotyrosine. Ser757 is subject to Phosphoserine. N6-acetyllysine; alternate is present on residues Lys770, Lys774, and Lys779. Residues Lys770, Lys774, and Lys779 each participate in a glycyl lysine isopeptide (Lys-Gly) (interchain with G-Cter in SUMO2); alternate cross-link. Lys779 participates in a covalent cross-link: Glycyl lysine isopeptide (Lys-Gly) (interchain with G-Cter in SUMO1); alternate. At Ser784 the chain carries Phosphoserine. Residue Lys804 forms a Glycyl lysine isopeptide (Lys-Gly) (interchain with G-Cter in SUMO2); alternate linkage. Lys804 participates in a covalent cross-link: Glycyl lysine isopeptide (Lys-Gly) (interchain with G-Cter in SUMO); alternate. The tract at residues 815–835 is disordered; that stretch reads MSLPGAGLSSQELSGGPGDGP. Position 824 is a phosphoserine; by ATM and ATR and dsDNA kinase (Ser824).

Belongs to the TRIM/RBCC family. Interacts with SETX. Oligomer; the RBCC domain homotrimerizes and interacts with one molecule of KRAB to form the KRAB-KAP1 corepressor complex. Binding to a KRAB domain is an absolute requirement for silencing gene expression. Interacts with CEBPB and NR3C1. Interacts with a number of KRAB-ZFP proteins including ZNF10, ZFP53, ZFP68, ZNF382 and ZNF256. Interacts with NCOR1, NR3C1 and CHD3. Interacts with CEBPB (via the RING-type and PHD-type zinc fingers). Component of a ternary complex that includes TRIM28, a HP1 protein (CBX1, CBX3 OR CBX5), a KRAB domain-containing protein, and DNA. Interacts with CBX5 (via the PxVxL motif); the interaction occurs in interphase nuclei and competes for binding POGZ. Interacts with POGZ; the interaction competes for interaction with CBX5. Interacts with SETDB1; the interaction is enhanced by KAP1 sumoylation, stimulates SETDB1 histone methyltransferase activity and gene silencing. Interacts (via the PHD-type zinc finger) with UBE2I; the interaction is required for sumoylation and repressor activity. Component of the TRIM28/KAP1-ERBB4-MDM2 complex involved in connecting growth factor and DNA damage responses. Interacts directly with ERBB4; the interaction represses ERBB4-mediated transcription activity. Interacts with MDM2; the interaction contributes to p53/TP53 inactivation. Component of the TRIM28/KAP1-MDM2-p53/TP53; involved in regulating p53/TP53 stabilization and activity. Interacts (via the leucine zipper alpha helical coiled-coil) with E2F1 (central region); the interaction inhibits E2F1 acetylation and transcriptional activity. Interacts with PPP1CA; the interaction dephosphorylates TRIM28 at Ser-824 and forms a complex at the p21 promoter site. Interacts with PPP1CB; the interaction is weak but is increased on dephosphorylation at Ser-824. Interacts with FES/FPS. Interacts with SMARCAD1. Interacts with, and sumoylates IRF7. Interacts with MAGEC2. Part of a complex composed of TRIM28, HDAC1, HDAC2 and EHMT2. Interacts with AICDA. Interacts (via the RBCC domain) with KOX1 (via the KRAB domain), ZNF268 (via the KRAB domain) and ZNF300 (via the KRAB domain); the interactions increase KOX1, ZNF268 and ZNF300 nuclear localization activities. The large PER complex involved in the histone methylation is composed of at least PER2, CBX3, TRIM28, SUV39H1 and/or SUV39H2; CBX3 mediates the formation of the complex. Interacts with isoform 2 of ZFP90. Forms a complex with FOXP3 in the presence of isoform 2 of ZFP90. Interacts with NR4A3; the interactions potentiates NR4A3 activity on NurRE promoter. Interacts (unphosphorylated or phosphorylated form) with ZBTB1 (via BTB domain). Probably part of a corepressor complex containing ZNF304, TRIM28, SETDB1 and DNMT1. Interacts with ATRX. Forms a complex with ATRX, SETDB1 and ZNF274. Interacts with ZFP568; the interaction mediates ZFP568 transcriptional repression activity. Interacts with RRP1B. Interacts with CRY1. Interacts with ZNF263; recruited to the SIX3 promoter along with other proteins involved in chromatin modification and transcriptional corepression where it contributes to transcriptional repression. Interacts with CYREN (via XLF motif). Interacts with TRIM17; this interaction prevents TRIM28 activity. Interacts with ZNF746. Interacts with PHF13. Interacts with ZNF354C. Interacts with ZNF432; the interaction is independent of PARP1. As to quaternary structure, (Microbial infection) Interacts with herpes virus 8 protein LANA1; this interaction facilitates establishment of viral latency. Post-translationally, ATM-induced phosphorylation on Ser-824 represses sumoylation leading to the de-repression of expression of a subset of genes involved in cell cycle control and apoptosis in response to genotoxic stress. Dephosphorylation by the phosphatases, PPP1CA and PP1CB forms, allows sumoylation and expression of TRIM28 target genes. Sumoylation/desumoylation events regulate TRIM28-mediated transcriptional repression. Sumoylation is required for interaction with CHD3 and SETDB1 and the corepressor activity. Represses and is repressed by Ser-824 phosphorylation. Enhances the TRIM28 corepressor activity, inhibiting transcriptional activity of a number of genes including GADD45A and CDKN1A/p21. Lys-554, Lys-779 and Lys-804 are the major sites of sumoylation. In response to Dox-induced DNA damage, enhanced phosphorylation on Ser-824 prevents sumoylation and allows de-repression of CDKN1A/p21. In terms of processing, auto-ubiquitinated; enhanced by MAGEA2 and MAGEC2. Post-translationally, citrullinated by PADI4. ADP-ribosylated by SIRT6, promoting TRIM28/KAP1 interaction with CBX5, thereby contributing to the packaging of LINE-1 retrotransposon elements into transcriptionally repressive heterochromatin. In terms of tissue distribution, expressed in all tissues tested including spleen, thymus, prostate, testis, ovary, small intestine, colon and peripheral blood leukocytes.

It is found in the nucleus. It carries out the reaction S-ubiquitinyl-[E2 ubiquitin-conjugating enzyme]-L-cysteine + [acceptor protein]-L-lysine = [E2 ubiquitin-conjugating enzyme]-L-cysteine + N(6)-ubiquitinyl-[acceptor protein]-L-lysine.. Its pathway is protein modification; protein sumoylation. Its function is as follows. Nuclear corepressor for KRAB domain-containing zinc finger proteins (KRAB-ZFPs). Mediates gene silencing by recruiting CHD3, a subunit of the nucleosome remodeling and deacetylation (NuRD) complex, and SETDB1 (which specifically methylates histone H3 at 'Lys-9' (H3K9me)) to the promoter regions of KRAB target genes. Enhances transcriptional repression by coordinating the increase in H3K9me, the decrease in histone H3 'Lys-9 and 'Lys-14' acetylation (H3K9ac and H3K14ac, respectively) and the disposition of HP1 proteins to silence gene expression. Recruitment of SETDB1 induces heterochromatinization. May play a role as a coactivator for CEBPB and NR3C1 in the transcriptional activation of ORM1. Also a corepressor for ERBB4. Inhibits E2F1 activity by stimulating E2F1-HDAC1 complex formation and inhibiting E2F1 acetylation. May serve as a partial backup to prevent E2F1-mediated apoptosis in the absence of RB1. Important regulator of CDKN1A/p21(CIP1). Has E3 SUMO-protein ligase activity toward itself via its PHD-type zinc finger. Also specifically sumoylates IRF7, thereby inhibiting its transactivation activity. Ubiquitinates p53/TP53 leading to its proteasomal degradation; the function is enhanced by MAGEC2 and MAGEA2, and possibly MAGEA3 and MAGEA6. Mediates the nuclear localization of KOX1, ZNF268 and ZNF300 transcription factors. In association with isoform 2 of ZFP90, is required for the transcriptional repressor activity of FOXP3 and the suppressive function of regulatory T-cells (Treg). Probably forms a corepressor complex required for activated KRAS-mediated promoter hypermethylation and transcriptional silencing of tumor suppressor genes (TSGs) or other tumor-related genes in colorectal cancer (CRC) cells. Required to maintain a transcriptionally repressive state of genes in undifferentiated embryonic stem cells (ESCs). In ESCs, in collaboration with SETDB1, is also required for H3K9me3 and silencing of endogenous and introduced retroviruses in a DNA-methylation independent-pathway. Associates at promoter regions of tumor suppressor genes (TSGs) leading to their gene silencing. The SETDB1-TRIM28-ZNF274 complex may play a role in recruiting ATRX to the 3'-exons of zinc-finger coding genes with atypical chromatin signatures to establish or maintain/protect H3K9me3 at these transcriptionally active regions. In terms of biological role, (Microbial infection) Plays a critical role in the shutdown of lytic gene expression during the early stage of herpes virus 8 primary infection. This inhibition is mediated through interaction with herpes virus 8 protein LANA1. This is Transcription intermediary factor 1-beta from Homo sapiens (Human).